Here is a 365-residue protein sequence, read N- to C-terminus: tRNA(Met) cytidine acetate ligase (365 aa).

ATP contacts are provided by residues 7–20 (IAEFNPFHNGHKYL), glycine 96, asparagine 152, and arginine 175.

This sequence belongs to the TmcAL family.

The protein localises to the cytoplasm. The catalysed reaction is cytidine(34) in elongator tRNA(Met) + acetate + ATP = N(4)-acetylcytidine(34) in elongator tRNA(Met) + AMP + diphosphate. Its function is as follows. Catalyzes the formation of N(4)-acetylcytidine (ac(4)C) at the wobble position of elongator tRNA(Met), using acetate and ATP as substrates. First activates an acetate ion to form acetyladenylate (Ac-AMP) and then transfers the acetyl group to tRNA to form ac(4)C34. This chain is tRNA(Met) cytidine acetate ligase, found in Streptococcus pneumoniae (strain JJA).